Here is a 263-residue protein sequence, read N- to C-terminus: Protein OPG165 (263 aa).

This sequence belongs to the orthopoxvirus OPG165 family.

The chain is Protein OPG165 (OPG165) from Homo sapiens (Human).